The sequence spans 56 residues: Large ribosomal subunit protein bL32 (56 aa).

The segment at 1–38 is disordered; that stretch reads MAVQQNKKSRSRRDMRRSHDALTTAAVSVDKTSGETHL. Over residues 7–16 the composition is skewed to basic residues; the sequence is KKSRSRRDMR.

This sequence belongs to the bacterial ribosomal protein bL32 family.

The chain is Large ribosomal subunit protein bL32 from Histophilus somni (strain 129Pt) (Haemophilus somnus).